Reading from the N-terminus, the 474-residue chain is MDFYSVKSQPFVRSPLVDQNPSIQNINEEVKRDIQNPLSYKTETSDKELCQTAACATSCSDWYPQQQTHMPHQNAFDSAKATAKMALPPTAFSNYCVKPSLTRNKDIPRTSIRVSKLRYWQRDYRLAFPNFIFYFDNVDEEIKRRVTQKINNLGAKVATLFTFEVTHFITTRTTDPEMCQPNDVLYLSKTANMKIWLLDKLLNRILFTLLNSDSLVNTSASCLQSLLDGEKVYGTSDKDFYVPSKNVEYFREYFLCIRDLSQYYKPIAVREWEKTLDSGEILWPSLAITAQGRCPFNTGRRRELKITKHNHPAHEIRKQLLSCTNQTNQNNVVKNSASVLVRQIMGDYNITESAVDGAKQMPTEFPKPENLLPVEKRAAMSPLNLLEPRLINKQNTLANQSPRQPPNAFDADPLAHKKVKIETKSGYCENCCERYKDLERHLGGKHHRRFAEKDENFQGLDDLFLLIRRPIRTN.

Residues 125-178 (RLAFPNFIFYFDNVDEEIKRRVTQKINNLGAKVATLFTFEVTHFITTRTTDPEM) enclose the BRCT domain. A DBF4-type zinc finger spans residues 421–470 (IETKSGYCENCCERYKDLERHLGGKHHRRFAEKDENFQGLDDLFLLIRRP). The Zn(2+) site is built by cysteine 428, cysteine 431, histidine 441, and histidine 447.

It localises to the nucleus. In terms of biological role, may act as a kinase regulator. Essential for progression of meiosis II and sporulation. This chain is Sporulation-specific protein 6 (spo6), found in Schizosaccharomyces pombe (strain 972 / ATCC 24843) (Fission yeast).